The chain runs to 297 residues: Mitochondrial thiamine pyrophosphate carrier 1 (297 aa).

Solcar repeat units follow at residues 13–94, 102–195, and 196–295; these read SHVF…TNAA, PPTI…IRAR, and WPET…LMRV. The next 6 membrane-spanning stretches (helical) occupy residues 19-36, 75-91, 109-128, 163-187, 203-219, and 270-287; these read LVSG…IAPL, IMYI…YSYT, LAGA…FDVL, GLGG…AMFG, TAGA…TFPL, and GIGL…INLW.

This sequence belongs to the mitochondrial carrier (TC 2.A.29) family.

It is found in the mitochondrion inner membrane. Mitochondrial transporter that mediates uptake of thiamine pyrophosphate (ThPP) into mitochondria. The chain is Mitochondrial thiamine pyrophosphate carrier 1 (TPC1) from Vanderwaltozyma polyspora (strain ATCC 22028 / DSM 70294 / BCRC 21397 / CBS 2163 / NBRC 10782 / NRRL Y-8283 / UCD 57-17) (Kluyveromyces polysporus).